The following is a 366-amino-acid chain: GTP cyclohydrolase 1 type 2 homolog (366 aa).

His-64, His-65, Asp-102, His-326, and Glu-329 together coordinate Zn(2+).

The protein belongs to the GTP cyclohydrolase I type 2/NIF3 family. As to quaternary structure, homohexamer.

In Staphylococcus aureus (strain COL), this protein is GTP cyclohydrolase 1 type 2 homolog.